The following is a 421-amino-acid chain: ATP-dependent RNA helicase RhlB (421 aa).

The Q motif motif lies at 9–37 (QKFSDFALHPQVVEALEKKGFYNCTPIQA). A Helicase ATP-binding domain is found at 40 to 219 (LPLTLAGRDV…FEQMNNAEYV (180 aa)). 53–60 (AQTGTGKT) is a binding site for ATP. A DEAD box motif is present at residues 165-168 (DEAD). The Helicase C-terminal domain occupies 245–390 (RLLQTLIEEE…VSKYNPEALM (146 aa)). Residues 396–421 (PLRLTRSRPGNGPRRAGAPRNRRRSG) form a disordered region. A compositionally biased stretch (low complexity) spans 402 to 414 (SRPGNGPRRAGAP).

This sequence belongs to the DEAD box helicase family. RhlB subfamily. In terms of assembly, component of the RNA degradosome, which is a multiprotein complex involved in RNA processing and mRNA degradation.

The protein resides in the cytoplasm. The enzyme catalyses ATP + H2O = ADP + phosphate + H(+). DEAD-box RNA helicase involved in RNA degradation. Has RNA-dependent ATPase activity and unwinds double-stranded RNA. In Salmonella agona (strain SL483), this protein is ATP-dependent RNA helicase RhlB.